Consider the following 293-residue polypeptide: Proline iminopeptidase (293 aa).

In terms of domain architecture, AB hydrolase-1 spans 28–277 (KPLVLLHGGP…YSRHMPFVEE (250 aa)). Residue S104 is the Nucleophile of the active site. D244 is a catalytic residue. The active-site Proton donor is the H271.

It belongs to the peptidase S33 family.

The catalysed reaction is Release of N-terminal proline from a peptide.. Functionally, releases the N-terminal proline from various substrates. This is Proline iminopeptidase from Clostridioides difficile (strain 630) (Peptoclostridium difficile).